Consider the following 236-residue polypeptide: C-&gt;U-editing enzyme APOBEC-1 (236 aa).

Residues 10–134 enclose the CMP/dCMP-type deaminase domain; that stretch reads GDPTLRRRIE…QQNRQGLRDL (125 aa). H61 is a binding site for Zn(2+). E63 acts as the Proton donor in catalysis. The Zn(2+) site is built by C93 and C96.

Belongs to the cytidine and deoxycytidylate deaminase family. In terms of assembly, homodimer. Interacts with A1CF; form an mRNA editing complex. Interacts with RBM47; form an mRNA editing complex. Found in a complex with CELF2/CUGBP2 and A1CF. Interacts with HNRPAB. Interacts with SYNCRIP. Requires Zn(2+) as cofactor. In terms of tissue distribution, expressed exclusively in the small intestine.

Its subcellular location is the cytoplasm. It localises to the nucleus. The enzyme catalyses a cytidine in mRNA + H2O + H(+) = a uridine in mRNA + NH4(+). It catalyses the reaction cytidine(6666) in apoB mRNA + H2O + H(+) = uridine(6666) in apoB mRNA + NH4(+). Its function is as follows. Cytidine deaminase catalyzing the cytidine to uridine postranscriptional editing of a variety of mRNAs. Form complexes with cofactors that confer differential editing activity and selectivity. Responsible for the postranscriptional editing of a CAA codon for Gln to a UAA codon for stop in the apolipoprotein B mRNA. Also involved in CGA (Arg) to UGA (Stop) editing in the NF1 mRNA. May also play a role in the epigenetic regulation of gene expression by participating in DNA demethylation. The sequence is that of C-&gt;U-editing enzyme APOBEC-1 from Homo sapiens (Human).